We begin with the raw amino-acid sequence, 289 residues long: Nucleotide-binding protein MS1718 (289 aa).

Residue 8–15 (GRSGAGKS) participates in ATP binding. 56 to 59 (DIRN) lines the GTP pocket.

This sequence belongs to the RapZ-like family.

In terms of biological role, displays ATPase and GTPase activities. The sequence is that of Nucleotide-binding protein MS1718 from Mannheimia succiniciproducens (strain KCTC 0769BP / MBEL55E).